Consider the following 271-residue polypeptide: MSRVGILVLGPAGVGKSTFCNALITHIQSIGRRAHIVNLDPAAEPNEYEFTVDIRDLISLNDVMEEMELGPNGGLMYCFEFLLQNMDWLEEELGEFEDEYLIFDCPGQIELYTHVPVLPTIVKHLQRHMGFSLCACYILEAPFVLDRPKFFSGVLSAMSAMILLETPHINILSKMDLIKDEVPKRELKRFLNPDPLLMVDEANSQTNPKFHQLNLAITNMIEDFGMVQFLPLEAKNPDSVAAILSYLDDVTQWADNQEPKEPKVEEVEEEE.

13 to 18 is a binding site for GTP; sequence GVGKST. Positions 70–72 match the Gly-Pro-Asn (GPN)-loop; involved in dimer interface motif; that stretch reads GPN. 173-176 provides a ligand contact to GTP; the sequence is SKMD.

This sequence belongs to the GPN-loop GTPase family. Heterodimers with GPN1 or GPN2. Binds to RNA polymerase II (RNAPII).

Its function is as follows. Small GTPase required for proper nuclear import of RNA polymerase II and III (RNAPII and RNAPIII). May act at an RNAP assembly step prior to nuclear import. The chain is GPN-loop GTPase 3 from Yarrowia lipolytica (strain CLIB 122 / E 150) (Yeast).